The primary structure comprises 313 residues: Fe-S cluster assembly protein dre2 (313 aa).

2 disordered regions span residues Met-1–Arg-25 and Gly-151–Asn-187. The segment at Asn-20–Val-145 is N-terminal SAM-like domain. Residues Pro-146–Leu-203 form a linker region. Residues Asn-159 to Gly-177 show a composition bias toward polar residues. Residues Cys-213, Cys-225, Cys-228, and Cys-230 each coordinate [2Fe-2S] cluster. A fe-S binding site A region spans residues Cys-213–Cys-230. Residues Cys-276, Cys-279, Cys-287, and Cys-290 each coordinate [4Fe-4S] cluster. Short sequence motifs (cx2C motif) lie at residues Cys-276 to Cys-279 and Cys-287 to Cys-290. Positions Cys-276–Cys-290 are fe-S binding site B.

It belongs to the anamorsin family. In terms of assembly, monomer. Interacts with tah18. Interacts with mia40. It depends on [2Fe-2S] cluster as a cofactor. Requires [4Fe-4S] cluster as cofactor.

The protein resides in the cytoplasm. It localises to the mitochondrion intermembrane space. Functionally, component of the cytosolic iron-sulfur (Fe-S) protein assembly (CIA) machinery required for the maturation of extramitochondrial Fe-S proteins. Part of an electron transfer chain functioning in an early step of cytosolic Fe-S biogenesis, facilitating the de novo assembly of a [4Fe-4S] cluster on the scaffold complex cfd1-nbp35. Electrons are transferred to dre2 from NADPH via the FAD- and FMN-containing protein tah18. Tah18-dre2 are also required for the assembly of the diferric tyrosyl radical cofactor of ribonucleotide reductase (RNR), probably by providing electrons for reduction during radical cofactor maturation in the catalytic small subunit rnr2. The chain is Fe-S cluster assembly protein dre2 from Aspergillus flavus (strain ATCC 200026 / FGSC A1120 / IAM 13836 / NRRL 3357 / JCM 12722 / SRRC 167).